A 142-amino-acid chain; its full sequence is MKTFSAKPAEVKRDWYVVDAEGKTLGRLSTEIARRLRGKHKPEYTPHVDTGDYIVVVNAEKVRVTGNKEQDKIYYKHTGYIGNMKSISLGKLRDRRPELIIETAVKGMLPKNPLGRAMFRKLKVYAGPSHQHQAQQPKPLEI.

It belongs to the universal ribosomal protein uL13 family. Part of the 50S ribosomal subunit.

Functionally, this protein is one of the early assembly proteins of the 50S ribosomal subunit, although it is not seen to bind rRNA by itself. It is important during the early stages of 50S assembly. The sequence is that of Large ribosomal subunit protein uL13 from Methylococcus capsulatus (strain ATCC 33009 / NCIMB 11132 / Bath).